We begin with the raw amino-acid sequence, 218 residues long: uncharacterized protein (218 aa).

A signal peptide spans 1-17; it reads MLKKIIILFLGIFLLSS. C18 is lipidated: N-palmitoyl cysteine. C18 carries S-diacylglycerol cysteine lipidation. A coiled-coil region spans residues 136 to 164; the sequence is YKEKKIEEELNQIKAMLKETKRDITKYTC.

The protein localises to the cell membrane. This is an uncharacterized protein from Rickettsia typhi (strain ATCC VR-144 / Wilmington).